Consider the following 275-residue polypeptide: MGISMILDNFLYLGAAKDTKDEKEMEKLKITHIFSCAGTVHSPEKYIIANEKFEDDETVDISEQIEKAYWFIERVRMKKGARVFIHCMAGKSRSASIVLSYLLKRDIHSLSDCLFYLHSKRLEIRPNDGFMNQLCDLELKLTNKQTLSKEIKEWRSLQSKALKTKIDVQTCHFIQPSLDSTKKANEQYLLHIQSISFTFFEIHLNQDKIIQLYQQQCQLLHSNNIDIKYFTSILQEELSNSTKKAFDFLLIHYYLDWQDIINNLLNYTNLKLNLN.

The Tyrosine-protein phosphatase domain maps to 2-143 (GISMILDNFL…LCDLELKLTN (142 aa)). C87 serves as the catalytic Phosphocysteine intermediate.

It belongs to the protein-tyrosine phosphatase family. Non-receptor class dual specificity subfamily.

It catalyses the reaction O-phospho-L-tyrosyl-[protein] + H2O = L-tyrosyl-[protein] + phosphate. The enzyme catalyses O-phospho-L-seryl-[protein] + H2O = L-seryl-[protein] + phosphate. The catalysed reaction is O-phospho-L-threonyl-[protein] + H2O = L-threonyl-[protein] + phosphate. Functionally, has a dual specificity toward Ser/Thr and Tyr-containing proteins. The polypeptide is Probable dual specificity protein phosphatase DDB_G0271350 (Dictyostelium discoideum (Social amoeba)).